The sequence spans 226 residues: Acyl-homoserine-lactone synthase (226 aa).

It belongs to the autoinducer synthase family.

The catalysed reaction is a fatty acyl-[ACP] + S-adenosyl-L-methionine = an N-acyl-L-homoserine lactone + S-methyl-5'-thioadenosine + holo-[ACP] + H(+). Its function is as follows. Required for the synthesis of OHHL (N-(3-oxohexanoyl)-L-homoserine lactone), an autoinducer molecule. This Pseudomonas amygdali pv. tabaci (Pseudomonas syringae pv. tabaci) protein is Acyl-homoserine-lactone synthase (psyI).